The sequence spans 299 residues: Cuticle collagen 34 (299 aa).

The disordered stretch occupies residues 105–282; it reads PGPAGTPGKP…GSPGERGICP (178 aa). Over residues 129-162 the composition is skewed to pro residues; sequence PGRPPQQPCEPITPPPCKPCPQGPPGPPGPPGPP. Over residues 164–181 the composition is skewed to low complexity; the sequence is DSGEPGSPGLPGQDAAPG. Composition is skewed to pro residues over residues 182–195 and 215–233; these read EPGP…PGAP and PGEP…PGSP. The triple-helical region stretch occupies residues 216-278; it reads GEPGPPGEAG…AGPPGSPGER (63 aa). Residues 251 to 263 are compositionally biased toward low complexity; that stretch reads NGPDGQPGADGNP. The segment covering 265-274 has biased composition (pro residues); it reads APGPAGPPGS.

Belongs to the cuticular collagen family. As to quaternary structure, collagen polypeptide chains are complexed within the cuticle by disulfide bonds and other types of covalent cross-links.

Functionally, nematode cuticles are composed largely of collagen-like proteins. The cuticle functions both as an exoskeleton and as a barrier to protect the worm from its environment. The chain is Cuticle collagen 34 (col-34) from Caenorhabditis elegans.